Reading from the N-terminus, the 87-residue chain is UPF0297 protein Sca_1229 (87 aa).

This sequence belongs to the UPF0297 family.

The polypeptide is UPF0297 protein Sca_1229 (Staphylococcus carnosus (strain TM300)).